Here is a 44-residue protein sequence, read N- to C-terminus: DNA-directed RNA polymerase subunit Rpo12 (44 aa).

Positions 8, 22, and 25 each coordinate Zn(2+).

Belongs to the archaeal Rpo12/eukaryotic RPC10 RNA polymerase subunit family. Part of the RNA polymerase complex. Requires Zn(2+) as cofactor.

It is found in the cytoplasm. It carries out the reaction RNA(n) + a ribonucleoside 5'-triphosphate = RNA(n+1) + diphosphate. In terms of biological role, DNA-dependent RNA polymerase (RNAP) catalyzes the transcription of DNA into RNA using the four ribonucleoside triphosphates as substrates. The chain is DNA-directed RNA polymerase subunit Rpo12 from Natronomonas pharaonis (strain ATCC 35678 / DSM 2160 / CIP 103997 / JCM 8858 / NBRC 14720 / NCIMB 2260 / Gabara) (Halobacterium pharaonis).